The following is a 338-amino-acid chain: tRNA N6-adenosine threonylcarbamoyltransferase (338 aa).

His109 and His113 together coordinate Fe cation. Substrate contacts are provided by residues 132 to 136 (AISGA), Asp165, Gly178, and Asn277. Residue Asp302 coordinates Fe cation.

The protein belongs to the KAE1 / TsaD family. It depends on Fe(2+) as a cofactor.

Its subcellular location is the cytoplasm. It catalyses the reaction L-threonylcarbamoyladenylate + adenosine(37) in tRNA = N(6)-L-threonylcarbamoyladenosine(37) in tRNA + AMP + H(+). Functionally, required for the formation of a threonylcarbamoyl group on adenosine at position 37 (t(6)A37) in tRNAs that read codons beginning with adenine. Is involved in the transfer of the threonylcarbamoyl moiety of threonylcarbamoyl-AMP (TC-AMP) to the N6 group of A37, together with TsaE and TsaB. TsaD likely plays a direct catalytic role in this reaction. This is tRNA N6-adenosine threonylcarbamoyltransferase from Chlamydia trachomatis serovar A (strain ATCC VR-571B / DSM 19440 / HAR-13).